Here is a 198-residue protein sequence, read N- to C-terminus: Nucleoid occlusion factor SlmA (198 aa).

Positions 9–70 (RNRREEILQA…SLIEFIEDSL (62 aa)) constitute an HTH tetR-type domain. Residues 33 to 52 (TTAKLAANVGVSEAALYRHF) constitute a DNA-binding region (H-T-H motif). A coiled-coil region spans residues 119-144 (DRLQGRINQLYERIEVQLRQVLRERK).

The protein belongs to the nucleoid occlusion factor SlmA family. In terms of assembly, homodimer. Interacts with FtsZ.

It localises to the cytoplasm. Its subcellular location is the nucleoid. Its function is as follows. Required for nucleoid occlusion (NO) phenomenon, which prevents Z-ring formation and cell division over the nucleoid. Acts as a DNA-associated cell division inhibitor that binds simultaneously chromosomal DNA and FtsZ, and disrupts the assembly of FtsZ polymers. SlmA-DNA-binding sequences (SBS) are dispersed on non-Ter regions of the chromosome, preventing FtsZ polymerization at these regions. The chain is Nucleoid occlusion factor SlmA from Sodalis glossinidius (strain morsitans).